The primary structure comprises 449 residues: Chromosomal replication initiator protein DnaA (449 aa).

The domain I, interacts with DnaA modulators stretch occupies residues 1-83 (MDDSLWSACL…VELEIGSPPT (83 aa)). A disordered region spans residues 77-114 (EIGSPPTPDQREAATGATRAAPAQRSSEPRQRPVDSNL). Positions 83–112 (TPDQREAATGATRAAPAQRSSEPRQRPVDS) are domain II. A compositionally biased stretch (low complexity) spans 89–99 (AATGATRAAPA). The domain III, AAA+ region stretch occupies residues 113 to 329 (NLNPGFTFDS…GALRRITANA (217 aa)). ATP-binding residues include G157, G159, K160, and T161. The domain IV, binds dsDNA stretch occupies residues 330–449 (QFTGRAIDVD…YDNLLRTLST (120 aa)).

Belongs to the DnaA family. Oligomerizes as a right-handed, spiral filament on DNA at oriC.

The protein localises to the cytoplasm. In terms of biological role, plays an essential role in the initiation and regulation of chromosomal replication. ATP-DnaA binds to the origin of replication (oriC) to initiate formation of the DNA replication initiation complex once per cell cycle. Binds the DnaA box (a 9 base pair repeat at the origin) and separates the double-stranded (ds)DNA. Forms a right-handed helical filament on oriC DNA; dsDNA binds to the exterior of the filament while single-stranded (ss)DNA is stabiized in the filament's interior. The ATP-DnaA-oriC complex binds and stabilizes one strand of the AT-rich DNA unwinding element (DUE), permitting loading of DNA polymerase. After initiation quickly degrades to an ADP-DnaA complex that is not apt for DNA replication. Binds acidic phospholipids. The protein is Chromosomal replication initiator protein DnaA of Halorhodospira halophila (strain DSM 244 / SL1) (Ectothiorhodospira halophila (strain DSM 244 / SL1)).